The primary structure comprises 340 residues: Glutaminyl-peptide cyclotransferase (340 aa).

A signal peptide spans methionine 1–glutamine 23. Asparagine 42 carries an N-linked (GlcNAc...) asparagine glycan. Alpha-D-mannopyranose is bound by residues arginine 85 and glutamate 91. Cysteines 113 and 136 form a disulfide. A Zn(2+)-binding site is contributed by aspartate 131. Residues glutamine 151 and arginine 155 each contribute to the alpha-D-mannopyranose site. N-linked (GlcNAc...) asparagine glycosylation is present at asparagine 156. The active-site Proton acceptor is the glutamate 170. Glutamate 171 lines the Zn(2+) pocket. Aspartate 218 (proton acceptor) is an active-site residue. A Zn(2+)-binding site is contributed by histidine 297. Leucine 306 contacts alpha-D-mannopyranose.

It belongs to the glutaminyl-peptide cyclotransferase family.

Its subcellular location is the secreted. It catalyses the reaction N-terminal L-glutaminyl-[peptide] = N-terminal 5-oxo-L-prolyl-[peptide] + NH4(+). Inhibited by imidazoles (imidazole, benzimidazole, 1-benzylimidazole, 1-methylimidazole, P150/03, N-omega-acetylhistamine and 4-methylimidazole) and cysteamines (cysteamine, N-dimethylcysteamine and N-diethylcysteamine). Partially inhibited by PDB50 1(3,4-dimethoxyphenyl)-3-(3-imidazol-1-ylpropyl)thiourea. Functionally, acts as a glutaminyl-peptide cyclotransferase. Responsible for the biosynthesis of pyroglutamyl peptides. Might be more efficient in the conversion of tri and tetrapeptides in vitro. Might have a relative preference for substrates containing hydrophobic amino acids in vitro. The protein is Glutaminyl-peptide cyclotransferase of Drosophila melanogaster (Fruit fly).